The chain runs to 91 residues: Sm-like protein LSM36B (91 aa).

One can recognise a Sm domain in the interval 14–86 (TPADFLKSIR…VLYISTTKGT (73 aa)).

Belongs to the snRNP Sm proteins family. As to quaternary structure, component of the heptameric LSM1-LSM7 complex that forms a seven-membered ring structure with a donut shape. The LSM subunits are arranged in the order LSM1, LSM2, LSM3, LSM6, LSM5, LSM7 and LSM4. Component of the heptameric LSM2-LSM8 complex that forms a seven-membered ring structure with a donut shape. The LSM subunits are arranged in the order LSM8, LSM2, LSM3, LSM6, LSM5, LSM7 and LSM4. LSM6B subunit interacts only with its two neighboring subunits, LSM3A or LSM3B and LSM5. Expressed in roots, leaves, stems, flowers and siliques.

It is found in the cytoplasm. The protein resides in the nucleus. Functionally, component of LSM protein complexes, which are involved in RNA processing. Component of the cytoplasmic LSM1-LSM7 complex which is involved in mRNA degradation by promoting decapping and leading to accurate 5'-3' mRNA decay. The cytoplasmic LSM1-LSM7 complex regulates developmental gene expression by the decapping of specific development-related transcripts. Component of the nuclear LSM2-LSM8 complex which is involved splicing nuclear mRNAs. LSM2-LSM8 binds directly to the U6 small nuclear RNAs (snRNAs) and is essential for accurate splicing of selected development-related mRNAs through the stabilization of the spliceosomal U6 snRNA. Plays a critical role in the regulation of development-related gene expression. In Arabidopsis thaliana (Mouse-ear cress), this protein is Sm-like protein LSM36B.